A 338-amino-acid chain; its full sequence is Phenylalanine--tRNA ligase alpha subunit (338 aa).

Position 253 (Glu253) interacts with Mg(2+).

This sequence belongs to the class-II aminoacyl-tRNA synthetase family. Phe-tRNA synthetase alpha subunit type 1 subfamily. In terms of assembly, tetramer of two alpha and two beta subunits. Mg(2+) serves as cofactor.

It is found in the cytoplasm. The catalysed reaction is tRNA(Phe) + L-phenylalanine + ATP = L-phenylalanyl-tRNA(Phe) + AMP + diphosphate + H(+). The chain is Phenylalanine--tRNA ligase alpha subunit from Gloeobacter violaceus (strain ATCC 29082 / PCC 7421).